The primary structure comprises 61 residues: Small ribosomal subunit protein uS14 (61 aa).

Cys24, Cys27, Cys40, and Cys43 together coordinate Zn(2+).

It belongs to the universal ribosomal protein uS14 family. Zinc-binding uS14 subfamily. In terms of assembly, part of the 30S ribosomal subunit. Contacts proteins S3 and S10. Zn(2+) serves as cofactor.

Its function is as follows. Binds 16S rRNA, required for the assembly of 30S particles and may also be responsible for determining the conformation of the 16S rRNA at the A site. This is Small ribosomal subunit protein uS14 from Syntrophotalea carbinolica (strain DSM 2380 / NBRC 103641 / GraBd1) (Pelobacter carbinolicus).